The chain runs to 85 residues: Colicin E3 immunity protein (85 aa).

It belongs to the cloacin immunity protein family. In terms of assembly, native colicin E3 is a 1:1 complex of A chain and protein B (Im3). Binds between the translocation and cytotoxic RNase domains of intact ColE3, blocking access to the 16S rRNA substrate. Forms a very tight 1:1 complex with the cytotoxic fragment (residues 456-551) of ColE3 (ceaC).

In terms of biological role, the cognate immunity protein for colicin E3 (ColE3), protects cells which harbor the plasmid ColE3 against the toxic action of ColE3. This protein inhibits the 16S RNA hydrolyzing activity of ColE3 by binding with very high affinity to the C-terminal catalytic domain of ColE3. This is Colicin E3 immunity protein from Escherichia coli.